A 315-amino-acid polypeptide reads, in one-letter code: Aspartate carbamoyltransferase catalytic subunit (315 aa).

The carbamoyl phosphate site is built by Arg64 and Thr65. An L-aspartate-binding site is contributed by Lys92. Carbamoyl phosphate is bound by residues Arg114, His142, and Gln145. Residues Arg175 and Arg229 each contribute to the L-aspartate site. Carbamoyl phosphate contacts are provided by Gly270 and Pro271.

Belongs to the aspartate/ornithine carbamoyltransferase superfamily. ATCase family. As to quaternary structure, heterododecamer (2C3:3R2) of six catalytic PyrB chains organized as two trimers (C3), and six regulatory PyrI chains organized as three dimers (R2).

The enzyme catalyses carbamoyl phosphate + L-aspartate = N-carbamoyl-L-aspartate + phosphate + H(+). Its pathway is pyrimidine metabolism; UMP biosynthesis via de novo pathway; (S)-dihydroorotate from bicarbonate: step 2/3. Catalyzes the condensation of carbamoyl phosphate and aspartate to form carbamoyl aspartate and inorganic phosphate, the committed step in the de novo pyrimidine nucleotide biosynthesis pathway. This Methylorubrum populi (strain ATCC BAA-705 / NCIMB 13946 / BJ001) (Methylobacterium populi) protein is Aspartate carbamoyltransferase catalytic subunit.